A 208-amino-acid chain; its full sequence is Outer-membrane lipoprotein carrier protein (208 aa).

The signal sequence occupies residues 1-22; the sequence is MKKRLCAVLLASPLLFSAAVFA.

The protein belongs to the LolA family. In terms of assembly, monomer.

It is found in the periplasm. Functionally, participates in the translocation of lipoproteins from the inner membrane to the outer membrane. Only forms a complex with a lipoprotein if the residue after the N-terminal Cys is not an aspartate (The Asp acts as a targeting signal to indicate that the lipoprotein should stay in the inner membrane). The chain is Outer-membrane lipoprotein carrier protein from Shewanella baltica (strain OS195).